We begin with the raw amino-acid sequence, 527 residues long: FHA domain-containing protein FhaA (527 aa).

Residue Thr116 is modified to Phosphothreonine. The interval 119 to 426 (FRARGTVNPD…APGGYSGYGQ (308 aa)) is disordered. Basic and acidic residues predominate over residues 170–188 (RPDEYYDDRYARPQEDPRG). Low complexity-rich tracts occupy residues 199–209 (RGGYPPETGGY) and 256–266 (YQDQGRGYPDQ). Residues 271 to 283 (YPPPYEQRPPVSP) are compositionally biased toward pro residues. The span at 284-299 (GPAAGYGAPGYDQGYR) shows a compositional bias: low complexity. Positions 300–322 (QSGGYGPSPGGGQPGYGGYGEYG) are enriched in gly residues. Residues 345 to 366 (RPAYPDQGGYDQGYQQGATTYG) are compositionally biased toward low complexity. The FHA domain maps to 455-504 (NIIGRGQDAQFRLPDTGVSRRHLEIRWDGQVALLADLNSTNGTTVNNAPV).

In terms of assembly, interacts with (phosphorylated) MviN and (phosphorylated) PknB via the FHA domain. Binds to the PknB juxtamembrane domain with an affinity that is modulated by the degree and the pattern of phosphorylation of this juxtamembrane domain. Phosphorylated by PknB.

The protein resides in the cytoplasm. Its function is as follows. Regulates cell growth and peptidoglycan synthesis by binding to MviN. May inhibit the late stages of peptidoglycan synthesis. In Mycobacterium tuberculosis (strain ATCC 25618 / H37Rv), this protein is FHA domain-containing protein FhaA (fhaA).